Here is a 435-residue protein sequence, read N- to C-terminus: Gap junction alpha-3 protein (435 aa).

An intramembrane segment occupies 2 to 15 (GDWSFLGRLLENAQ). At 16-19 (EHST) the chain is on the cytoplasmic side. A helical membrane pass occupies residues 20 to 40 (VIGKVWLTVLFIFRILVLGAA). Residues 41 to 71 (AEDVWGDEQSDFTCNTQQPGCENVCYDRAFP) are Extracellular-facing. Intrachain disulfides connect cysteine 54–cysteine 192, cysteine 61–cysteine 186, and cysteine 65–cysteine 181. A helical transmembrane segment spans residues 72–92 (ISHIRFWALQIIFVSTPTLIY). Residues 93 to 152 (LGHVLHIVRMEEKKKEREEEEQLKRESPSPKEPPQDNPSSRDDRGRVRMAGALLRTYVFN) are Cytoplasmic-facing. The span at 108–121 (EREEEEQLKRESPS) shows a compositional bias: basic and acidic residues. The disordered stretch occupies residues 108–136 (EREEEEQLKRESPSPKEPPQDNPSSRDDR). Residues 153–173 (IIFKTLFEVGFIAGQYFLYGF) traverse the membrane as a helical segment. Over 174–201 (ELKPLYRCDRWPCPNTVDCFISRPTEKT) the chain is Extracellular. The helical transmembrane segment at 202–222 (IFIIFMLAVACASLLLNMLEI) threads the bilayer. At 223–435 (YHLGWKKLKQ…GRARPEDLAI (213 aa)) the chain is on the cytoplasmic side. The disordered stretch occupies residues 332-435 (AAERQPPALK…GRARPEDLAI (104 aa)). 2 stretches are compositionally biased toward low complexity: residues 342 to 389 (AYPA…ALAG) and 415 to 427 (GRASKASRASSGR).

The protein belongs to the connexin family. Alpha-type (group II) subfamily. A hemichannel or connexon is composed of a hexamer of connexins. A functional gap junction is formed by the apposition of two hemichannels. Forms heteromeric channels with GJA8.

The protein localises to the cell membrane. It localises to the cell junction. Its subcellular location is the gap junction. Structural component of lens fiber gap junctions. Gap junctions are dodecameric channels that connect the cytoplasm of adjoining cells. They are formed by the docking of two hexameric hemichannels, one from each cell membrane. Small molecules and ions diffuse from one cell to a neighboring cell via the central pore. The sequence is that of Gap junction alpha-3 protein (GJA3) from Homo sapiens (Human).